A 107-amino-acid polypeptide reads, in one-letter code: Homeobox protein HD-3 (107 aa).

A DNA-binding region (homeobox) is located at residues 6 to 65; it reads SKAPRTRMTAGQTRVLMSFFKDNPFPSTTAREKLSKVLGVGPRTVQIWFQNQRQKARGQA.

Its subcellular location is the nucleus. In Encephalitozoon cuniculi (strain GB-M1) (Microsporidian parasite), this protein is Homeobox protein HD-3 (HD-3).